The primary structure comprises 154 residues: UPF0225 protein YpsIP31758_1970 (154 aa).

The protein belongs to the UPF0225 family.

This is UPF0225 protein YpsIP31758_1970 from Yersinia pseudotuberculosis serotype O:1b (strain IP 31758).